Here is a 209-residue protein sequence, read N- to C-terminus: Guanylate kinase (209 aa).

Positions 9 to 188 (GIMLVISSPS…SVHQIKCIFT (180 aa)) constitute a Guanylate kinase-like domain. 16–23 (SPSGGGKT) is an ATP binding site.

This sequence belongs to the guanylate kinase family.

The protein localises to the cytoplasm. It catalyses the reaction GMP + ATP = GDP + ADP. Essential for recycling GMP and indirectly, cGMP. This chain is Guanylate kinase, found in Ehrlichia canis (strain Jake).